Reading from the N-terminus, the 458-residue chain is MENKTETTVRRRRRIILFPVPFQGHINPILQLANVLYSKGFSITIFHTNFNKPKTSNYPHFTFRFILDNDPQDERISNLPTHGPLAGMRIPIINEHGADELRRELELLMLASEEDEEVSCLITDALWYFAQSVADSLNLRRLVLMTSSLFNFHAHVSLPQFDELGYLDPDDKTRLEEQASGFPMLKVKDIKSAYSNWQILKEILGKMIKQTKASSGVIWNSFKELEESELETVIREIPAPSFLIPLPKHLTASSSSLLDHDRTVFQWLDQQPPSSVLYVSFGSTSEVDEKDFLEIARGLVDSKQSFLWVVRPGFVKGSTWVEPLPDGFLGERGRIVKWVPQQEVLAHGAIGAFWTHSGWNSTLESVCEGVPMIFSDFGLDQPLNARYMSDVLKVGVYLENGWERGEIANAIRRVMVDEEGEYIRQNARVLKQKADVSLMKGGSSYESLESLVSYISSL.

His-25 serves as the catalytic Proton acceptor. His-25 contacts rebaudioside A. Residue His-25 participates in rubusoside binding. A UDP-binding site is contributed by Asn-27. The Charge relay role is filled by Asp-124. Residues 146–147 (TS) and His-155 contribute to the rebaudioside A site. Residues Ser-283, 338-339 (WV), and 356-364 (HSGWNSTLE) each bind UDP. Rebaudioside A-binding positions include Trp-359 and 380–381 (DQ).

This sequence belongs to the UDP-glycosyltransferase family. Monomer.

The enzyme catalyses steviolbioside + UDP-alpha-D-glucose = rebaudioside B + UDP + H(+). It carries out the reaction stevioside + UDP-alpha-D-glucose = rebaudioside A + UDP + H(+). It catalyses the reaction rebaudioside E + UDP-alpha-D-glucose = rebaudioside D + UDP + H(+). The catalysed reaction is rebaudioside D + UDP-alpha-D-glucose = rebaudioside M + UDP + H(+). In terms of biological role, involved in the biosynthesis of steviol glycosides in leaves. Converts the di-glycoside steviolbioside to the tri-glycoside rebaudioside B. Converts the tri-glycoside stevioside to the tetra-glycoside rebaudioside A. Converts the tetra-glycoside rebaudioside E to the penta-glycoside rebaudioside D. Converts the penta-glycoside rebaudioside D to the hexa-glycoside rebaudioside M. Can glucosylate rubusoside and rebaudioside A in vitro. This Stevia rebaudiana (Stevia) protein is UDP-glycosyltransferase 76G1.